The chain runs to 713 residues: Probable 1-deoxy-D-xylulose-5-phosphate synthase 2, chloroplastic (713 aa).

A chloroplast-targeting transit peptide spans 1-30; sequence MALQASSSPSMFRAIPTNTNASCRRKLQVR. Thiamine diphosphate-binding positions include His140 and 181–183; that span reads GHS. Position 212 (Asp212) interacts with Mg(2+). Residues 213–214, Asn241, Tyr362, and Glu444 each bind thiamine diphosphate; that span reads GA. Mg(2+) is bound at residue Asn241.

The protein belongs to the transketolase family. DXPS subfamily. In terms of assembly, homodimer. Requires Mg(2+) as cofactor. The cofactor is thiamine diphosphate.

It is found in the plastid. The protein localises to the chloroplast. The enzyme catalyses D-glyceraldehyde 3-phosphate + pyruvate + H(+) = 1-deoxy-D-xylulose 5-phosphate + CO2. It functions in the pathway metabolic intermediate biosynthesis; 1-deoxy-D-xylulose 5-phosphate biosynthesis; 1-deoxy-D-xylulose 5-phosphate from D-glyceraldehyde 3-phosphate and pyruvate: step 1/1. Functionally, catalyzes the acyloin condensation reaction between C atoms 2 and 3 of pyruvate and glyceraldehyde 3-phosphate to yield 1-deoxy-D-xylulose-5-phosphate (DXP). Is a limiting enzyme for plastidic isoprenoid biosynthesis and essential for chloroplast development. The sequence is that of Probable 1-deoxy-D-xylulose-5-phosphate synthase 2, chloroplastic from Oryza sativa subsp. japonica (Rice).